The sequence spans 107 residues: ATP-dependent Clp protease adapter protein ClpS (107 aa).

Residues methionine 1–aspartate 12 are compositionally biased toward basic and acidic residues. Positions methionine 1–proline 21 are disordered.

Belongs to the ClpS family. Binds to the N-terminal domain of the chaperone ClpA.

Functionally, involved in the modulation of the specificity of the ClpAP-mediated ATP-dependent protein degradation. The polypeptide is ATP-dependent Clp protease adapter protein ClpS (Zymomonas mobilis subsp. mobilis (strain ATCC 31821 / ZM4 / CP4)).